We begin with the raw amino-acid sequence, 211 residues long: Large ribosomal subunit protein eL13 (211 aa).

An N6-acetyllysine modification is found at K16. Phosphoserine occurs at positions 52, 77, and 106. Glycyl lysine isopeptide (Lys-Gly) (interchain with G-Cter in SUMO2) cross-links involve residues K123 and K145. A Glycyl lysine isopeptide (Lys-Gly) (interchain with G-Cter in SUMO1); alternate cross-link involves residue K174. Glycyl lysine isopeptide (Lys-Gly) (interchain with G-Cter in SUMO2); alternate cross-links involve residues K174 and K177. At K177 the chain carries N6-acetyllysine; alternate.

This sequence belongs to the eukaryotic ribosomal protein eL13 family. Component of the 60S large ribosomal subunit (LSU).

The protein resides in the cytoplasm. Its function is as follows. Component of the ribosome, a large ribonucleoprotein complex responsible for the synthesis of proteins in the cell. The small ribosomal subunit (SSU) binds messenger RNAs (mRNAs) and translates the encoded message by selecting cognate aminoacyl-transfer RNA (tRNA) molecules. The large subunit (LSU) contains the ribosomal catalytic site termed the peptidyl transferase center (PTC), which catalyzes the formation of peptide bonds, thereby polymerizing the amino acids delivered by tRNAs into a polypeptide chain. The nascent polypeptides leave the ribosome through a tunnel in the LSU and interact with protein factors that function in enzymatic processing, targeting, and the membrane insertion of nascent chains at the exit of the ribosomal tunnel. As part of the LSU, it is probably required for its formation and the maturation of rRNAs. Plays a role in bone development. This chain is Large ribosomal subunit protein eL13 (Rpl13), found in Rattus norvegicus (Rat).